The primary structure comprises 125 residues: Upsalin (125 aa).

The signal sequence occupies residues 1–16 (MFPTHVLLIVIACVTA).

Post-translationally, weakly glycosylated. In terms of tissue distribution, expressed at highest levels in mantle, followed by adductor muscle. Found in the nacreous shell layer (at protein level).

It is found in the secreted. The chain is Upsalin from Unio pictorum (Painter's mussel).